The sequence spans 506 residues: Anaerobic nitric oxide reductase transcription regulator NorR (506 aa).

Asp-57 carries the post-translational modification 4-aspartylphosphate. The region spanning 187-416 (MIGLSPNMMQ…LEHAIHRAVV (230 aa)) is the Sigma-54 factor interaction domain. Residues 215–222 (GETGTGKE) and 278–287 (ADNGTLFLDE) each bind ATP. The segment at residues 481–500 (WAACARALETDVANLHRLAK) is a DNA-binding region (H-T-H motif).

The protein operates within nitrogen metabolism; nitric oxide reduction. Functionally, required for the expression of anaerobic nitric oxide (NO) reductase, acts as a transcriptional activator for at least the norVW operon. Activation also requires sigma-54. This chain is Anaerobic nitric oxide reductase transcription regulator NorR, found in Citrobacter koseri (strain ATCC BAA-895 / CDC 4225-83 / SGSC4696).